Reading from the N-terminus, the 130-residue chain is Small ribosomal subunit protein uS9 (130 aa).

Positions 98–130 (LKRAGLLTRDPRMKERKKPGLKKARRSPQFSKR) are disordered. Basic residues predominate over residues 111 to 130 (KERKKPGLKKARRSPQFSKR).

The protein belongs to the universal ribosomal protein uS9 family.

This Staphylococcus carnosus (strain TM300) protein is Small ribosomal subunit protein uS9 (rpsI).